The chain runs to 483 residues: V-type proton ATPase subunit H (483 aa).

The residue at position 483 (Ser483) is a Phosphoserine.

The protein belongs to the V-ATPase H subunit family. V-ATPase is a heteromultimeric enzyme made up of two complexes: the ATP-hydrolytic V1 complex and the proton translocation V0 complex. The V1 complex consists of three catalytic AB heterodimers that form a heterohexamer, three peripheral stalks each consisting of EG heterodimers, one central rotor including subunits D and F, and the regulatory subunits C and H. The proton translocation complex V0 consists of the proton transport subunit a, a ring of proteolipid subunits c9c'', rotary subunit d, subunits e and f, and the accessory subunits ATP6AP1/Ac45 and ATP6AP2/PRR. Interacts with AP2M1. Interacts with TM9SF4 in colon cancer cells. In terms of assembly, (Microbial infection) Interacts with HIV-1 Nef protein. As to quaternary structure, (Microbial infection) Interacts with M.tuberculosis PtpA, which blocks V-ATPase trafficking and phagosome acidification. As to expression, widely expressed.

The protein resides in the cytoplasmic vesicle. It is found in the clathrin-coated vesicle membrane. Functionally, subunit of the V1 complex of vacuolar(H+)-ATPase (V-ATPase), a multisubunit enzyme composed of a peripheral complex (V1) that hydrolyzes ATP and a membrane integral complex (V0) that translocates protons. V-ATPase is responsible for acidifying and maintaining the pH of intracellular compartments and in some cell types, is targeted to the plasma membrane, where it is responsible for acidifying the extracellular environment. Subunit H is essential for V-ATPase activity, but not for the assembly of the complex. Involved in the endocytosis mediated by clathrin-coated pits, required for the formation of endosomes. The chain is V-type proton ATPase subunit H (ATP6V1H) from Homo sapiens (Human).